We begin with the raw amino-acid sequence, 446 residues long: Glycerol-3-phosphate acyltransferase 3 (446 aa).

The next 3 helical transmembrane spans lie at 25–45, 142–162, and 164–184; these read LPSALGVSLGISEAYMWVLVK, LRLTVVWVIGVIVRYCFLLPL, and FTLAAIGITSMIVGTTVVGQL. Residues 232 to 237 carry the HXXXXD motif motif; it reads HTSPID. A helical transmembrane segment spans residues 352-372; sequence IVSYLLRIMTSWAIVCHVWYM. Residues 418 to 446 are disordered; it reads FKEEQQKNYSKMLVRNGSQGNLPAGTESD.

Belongs to the 1-acyl-sn-glycerol-3-phosphate acyltransferase family.

The protein localises to the endoplasmic reticulum membrane. The catalysed reaction is sn-glycerol 3-phosphate + an acyl-CoA = a 1-acyl-sn-glycero-3-phosphate + CoA. It catalyses the reaction a 1-acyl-sn-glycero-3-phosphate + an acyl-CoA = a 1,2-diacyl-sn-glycero-3-phosphate + CoA. It carries out the reaction dodecanoyl-CoA + sn-glycerol 3-phosphate = 1-dodecanoyl-sn-glycerol 3-phosphate + CoA. The enzyme catalyses sn-glycerol 3-phosphate + hexadecanoyl-CoA = 1-hexadecanoyl-sn-glycero-3-phosphate + CoA. The catalysed reaction is sn-glycerol 3-phosphate + (9Z)-octadecenoyl-CoA = 1-(9Z-octadecenoyl)-sn-glycero-3-phosphate + CoA. It catalyses the reaction (9Z,12Z)-octadecadienoyl-CoA + sn-glycerol 3-phosphate = 1-(9Z,12Z)-octadecadienoyl-sn-glycero-3-phosphate + CoA. It carries out the reaction 1-tetradecanoyl-sn-glycerol 3-phosphate + (9Z)-octadecenoyl-CoA = 1-tetradecanoyl-2-(9Z)-octadecenoyl-sn-glycero-3-phosphate + CoA. The enzyme catalyses 1-hexadecanoyl-sn-glycero-3-phosphate + (9Z)-octadecenoyl-CoA = 1-hexadecanoyl-2-(9Z-octadecenoyl)-sn-glycero-3-phosphate + CoA. The catalysed reaction is 1-(9Z-octadecenoyl)-sn-glycero-3-phosphate + (9Z)-octadecenoyl-CoA = 1,2-di-(9Z-octadecenoyl)-sn-glycero-3-phosphate + CoA. It catalyses the reaction 1-(6Z,9Z,12Z-octadecatrienoyl)-sn-glycero-3-phosphate + (9Z)-octadecenoyl-CoA = (6Z,9Z,12Z)-octadecatrienoyl-2-(9Z)-octadecenoyl-sn-glycero-3-phosphate + CoA. It carries out the reaction 1-(9Z,12Z,15Z)-octadecatrienoyl-sn-glycero-3-phosphate + (9Z)-octadecenoyl-CoA = 1-(9Z,12Z,15Z)-octadecatrienoyl-2-(9Z)-octadecenoyl-sn-glycero-3-phosphate + CoA. The enzyme catalyses 1-(9Z-octadecenoyl)-sn-glycero-3-phosphate + tetradecanoyl-CoA = 1-(9Z)-octadecenoyl-2-tetradecanoyl-sn-glycero-3-phosphate + CoA. The catalysed reaction is 1-(9Z-octadecenoyl)-sn-glycero-3-phosphate + hexadecanoyl-CoA = 1-(9Z)-octadecenoyl-2-hexadecanoyl-sn-glycero-3-phosphate + CoA. It catalyses the reaction 1-(9Z-octadecenoyl)-sn-glycero-3-phosphate + octadecanoyl-CoA = 1-(9Z-octadecenoyl)-2-octadecanoyl-sn-glycero-3-phosphate + CoA. It carries out the reaction 1-(9Z-octadecenoyl)-sn-glycero-3-phosphate + (9Z,12Z)-octadecadienoyl-CoA = 1-(9Z)-octadecenoyl-2-(9Z,12Z)-octadecadienoyl-sn-glycero-3-phosphate + CoA. The enzyme catalyses 1-(5Z,8Z,11Z,14Z-eicosatetraenoyl)-sn-glycero-3-phosphate + (9Z)-octadecenoyl-CoA = 1-(5Z,8Z,11Z,14Z)-eicosatetraenoyl-2-(9Z)-octadecenoyl-sn-glycero-3-phosphate + CoA. It participates in glycerolipid metabolism; triacylglycerol biosynthesis. Its pathway is phospholipid metabolism; CDP-diacylglycerol biosynthesis; CDP-diacylglycerol from sn-glycerol 3-phosphate: step 1/3. Functionally, converts glycerol-3-phosphate to 1-acyl-sn-glycerol-3-phosphate (lysophosphatidic acid or LPA) by incorporating an acyl moiety at the sn-1 position of the glycerol backbone. Also converts LPA into 1,2-diacyl-sn-glycerol-3-phosphate (phosphatidic acid or PA) by incorporating an acyl moiety at the sn-2 position of the glycerol backbone. Protects cells against lipotoxicity. The chain is Glycerol-3-phosphate acyltransferase 3 from Gallus gallus (Chicken).